The primary structure comprises 547 residues: Chaperonin GroEL (547 aa).

ATP-binding positions include 30–33 (TLGP), Lys-51, 87–91 (DGTTT), Gly-415, and Asp-496. Positions 528 to 547 (KEGAGAGGGMPDMGGMGGMM) are disordered. Residues 531-547 (AGAGGGMPDMGGMGGMM) show a composition bias toward gly residues.

Belongs to the chaperonin (HSP60) family. As to quaternary structure, forms a cylinder of 14 subunits composed of two heptameric rings stacked back-to-back. Interacts with the co-chaperonin GroES.

Its subcellular location is the cytoplasm. It carries out the reaction ATP + H2O + a folded polypeptide = ADP + phosphate + an unfolded polypeptide.. Together with its co-chaperonin GroES, plays an essential role in assisting protein folding. The GroEL-GroES system forms a nano-cage that allows encapsulation of the non-native substrate proteins and provides a physical environment optimized to promote and accelerate protein folding. This Dinoroseobacter shibae (strain DSM 16493 / NCIMB 14021 / DFL 12) protein is Chaperonin GroEL.